The chain runs to 55 residues: Large ribosomal subunit protein bL33 (55 aa).

This sequence belongs to the bacterial ribosomal protein bL33 family.

This chain is Large ribosomal subunit protein bL33, found in Hyphomonas neptunium (strain ATCC 15444).